The primary structure comprises 670 residues: Solute carrier organic anion transporter family member 1A4 (670 aa).

Residues 1-20 (MGKSEKEVATHGVRCFSKIK) are Cytoplasmic-facing. Residues 21-40 (AFLLALTCAYVSKSLSGTYM) form a helical membrane-spanning segment. Topologically, residues 41-59 (NSMLTQIERQFGIPTSVVG) are extracellular. The helical transmembrane segment at 60–80 (LINGSFEIGNLLLIIFVSYFG) threads the bilayer. Residues 81 to 86 (TKLHRP) lie on the Cytoplasmic side of the membrane. Residues 87–111 (IMIGVGCAVMGLGCFLISIPHFLMG) form a helical membrane-spanning segment. The Extracellular portion of the chain corresponds to 112–155 (RYEYETTILPTSNLSSNSFVCTENRTQTLKPTQDPTECVKEMKS). 2 N-linked (GlcNAc...) asparagine glycosylation sites follow: N124 and N135. The helical transmembrane segment at 156–184 (LMWIYVLVGNIIRGMGETPIMPLGISYIE) threads the bilayer. Residues 185-203 (DFAKSENSPLYIGILETGM) lie on the Cytoplasmic side of the membrane. A helical transmembrane segment spans residues 204-224 (TIGPLIGLLLGSSCANIYVDT). At 225–242 (GSVNTDDLTITPTDTRWV) the chain is on the extracellular side. The chain crosses the membrane as a helical span at residues 243-267 (GAWWIGFLVCAGVNILTSIPFFFFP). At 268-311 (KTLLKEGLQDNGDGTENAKEEKHREKIKEENRGITKDFFLFMKS) the chain is on the cytoplasmic side. A helical transmembrane segment spans residues 312–333 (LSCNPIYMIFILISVIQVNAFI). Topologically, residues 334–353 (NSFTFMPKYLEQQYGKSTAE) are extracellular. The helical transmembrane segment at 354–377 (IVFLMGLYMLPPICLGYLIGGLIM) threads the bilayer. Residues 378-381 (KKFK) are Cytoplasmic-facing. Residues 382-405 (ITVKKAAYIGFWLSLTEYLLSFVS) form a helical membrane-spanning segment. Residues 406–513 (YIMTCDNFPV…PECANKLQYF (108 aa)) are Extracellular-facing. The region spanning 433–488 (NNVLADCNTKCSCLTNTWDPVCGDNGLSYMSACLAGCEKSVGTGTNMVFQNCSCIQ) is the Kazal-like domain. 3 cysteine pairs are disulfide-bonded: C439-C469, C445-C465, and C454-C486. N-linked (GlcNAc...) asparagine glycosylation is found at N483 and N492. Residues 514 to 536 (LIISIIGCFIFSLGAIPGYMVLL) form a helical membrane-spanning segment. The Cytoplasmic segment spans residues 537–545 (RCMKSEEKS). The chain crosses the membrane as a helical span at residues 546-571 (LGVGLHTFCMRILGGIPAPIYFGALI). The Extracellular portion of the chain corresponds to 572-605 (DRTCLHWGTLKCGEPGACRMYDINSFRRIYLGLP). Residues 606-623 (AALRGASFLPALFILILM) traverse the membrane as a helical segment. Topologically, residues 624-670 (RKFQFPGDIDSSDTDPAEMKLTAKESKCTNVHRSPTMQNDGERKTKL) are cytoplasmic. A phosphoserine mark is found at S634 and S635. Positions 649–670 (SKCTNVHRSPTMQNDGERKTKL) are disordered. Over residues 651-662 (CTNVHRSPTMQN) the composition is skewed to polar residues.

Belongs to the organo anion transporter (TC 2.A.60) family. In terms of tissue distribution, highly expressed in brain and liver. Detected at very low levels in heart and lung.

It localises to the cell membrane. It catalyses the reaction estrone 3-sulfate(out) = estrone 3-sulfate(in). The enzyme catalyses taurocholate(out) = taurocholate(in). It carries out the reaction prostaglandin E2(out) = prostaglandin E2(in). The catalysed reaction is L-thyroxine(out) = L-thyroxine(in). In terms of biological role, mediates the Na(+)-independent transport of organic anions such as taurocholate, cholate, 17-beta-glucuronosyl estradiol, prostaglandin E2, estrone 3-sulfate, L-thyroxine (T4), the cardiac glycosides ouabain and digoxin and thyroid hormones. Shows a pH-sensitive substrate specificity which may be ascribed to the protonation state of the binding site and leads to a stimulation of substrate transport in an acidic microenvironment. Hydrogencarbonate/HCO3(-) acts as the probable counteranion that exchanges for organic anions. The polypeptide is Solute carrier organic anion transporter family member 1A4 (Slco1a4) (Mus musculus (Mouse)).